We begin with the raw amino-acid sequence, 428 residues long: Divergent protein kinase domain 1A (428 aa).

The Cytoplasmic portion of the chain corresponds to 1–27; it reads MARSLCPGAWLRKPYYLQARFSYVRMK. A helical membrane pass occupies residues 28-48; the sequence is YLFFSWLVVFVGSWIIYVQYS. Residues 49–428 lie on the Lumenal side of the membrane; sequence TYTELCRGKD…WKKISYTNDS (380 aa).

This sequence belongs to the DIPK family. In terms of processing, among the many cysteines in the lumenal domain, most are probably involved in disulfide bonds.

It localises to the endoplasmic reticulum membrane. The sequence is that of Divergent protein kinase domain 1A from Homo sapiens (Human).